The chain runs to 379 residues: tRNA (guanine(26)-N(2))-dimethyltransferase (379 aa).

The Trm1 methyltransferase domain maps to 4-375; sequence VEVLEGKAKI…APYEVFVNVL (372 aa). S-adenosyl-L-methionine contacts are provided by arginine 36, arginine 61, aspartate 78, aspartate 120, and alanine 121.

The protein belongs to the class I-like SAM-binding methyltransferase superfamily. Trm1 family.

The enzyme catalyses guanosine(26) in tRNA + 2 S-adenosyl-L-methionine = N(2)-dimethylguanosine(26) in tRNA + 2 S-adenosyl-L-homocysteine + 2 H(+). In terms of biological role, dimethylates a single guanine residue at position 26 of a number of tRNAs using S-adenosyl-L-methionine as donor of the methyl groups. The sequence is that of tRNA (guanine(26)-N(2))-dimethyltransferase from Pyrococcus abyssi (strain GE5 / Orsay).